Here is a 294-residue protein sequence, read N- to C-terminus: Cell division protein ZipA (294 aa).

A topological domain (periplasmic) is located at residue M1. The chain crosses the membrane as a helical span at residues 2 to 22; sequence EIGLREWLILIGIIVIAGILF. The Cytoplasmic segment spans residues 23–294; it reads DGWRRMRGGK…FERRALTQKR (272 aa). The tract at residues 47 to 107 is disordered; that stretch reads PDEEGSAEVL…GKRAAEMQPQ (61 aa). A compositionally biased stretch (basic and acidic residues) spans 82–91; the sequence is AREREREQKP.

It belongs to the ZipA family. As to quaternary structure, interacts with FtsZ via their C-terminal domains.

The protein resides in the cell inner membrane. Essential cell division protein that stabilizes the FtsZ protofilaments by cross-linking them and that serves as a cytoplasmic membrane anchor for the Z ring. Also required for the recruitment to the septal ring of downstream cell division proteins. This Pseudomonas putida (strain W619) protein is Cell division protein ZipA.